Here is a 197-residue protein sequence, read N- to C-terminus: Holliday junction branch migration complex subunit RuvA (197 aa).

Residues 1–63 (MINKIHGKVI…ENELKLFGFL (63 aa)) are domain I. The domain II stretch occupies residues 64–139 (NSDEREIFKE…KLLINSELES (76 aa)). S139 is a region of interest (flexible linker). The tract at residues 140–197 (TGLFRFKELEESIVSMGFDRKIVNSKIREAFNLAEFANLKDSEKEQFLFKEVLKRISN) is domain III.

Belongs to the RuvA family. As to quaternary structure, homotetramer. Forms an RuvA(8)-RuvB(12)-Holliday junction (HJ) complex. HJ DNA is sandwiched between 2 RuvA tetramers; dsDNA enters through RuvA and exits via RuvB. An RuvB hexamer assembles on each DNA strand where it exits the tetramer. Each RuvB hexamer is contacted by two RuvA subunits (via domain III) on 2 adjacent RuvB subunits; this complex drives branch migration. In the full resolvosome a probable DNA-RuvA(4)-RuvB(12)-RuvC(2) complex forms which resolves the HJ.

The protein localises to the cytoplasm. The RuvA-RuvB-RuvC complex processes Holliday junction (HJ) DNA during genetic recombination and DNA repair, while the RuvA-RuvB complex plays an important role in the rescue of blocked DNA replication forks via replication fork reversal (RFR). RuvA specifically binds to HJ cruciform DNA, conferring on it an open structure. The RuvB hexamer acts as an ATP-dependent pump, pulling dsDNA into and through the RuvAB complex. HJ branch migration allows RuvC to scan DNA until it finds its consensus sequence, where it cleaves and resolves the cruciform DNA. This chain is Holliday junction branch migration complex subunit RuvA, found in Borreliella burgdorferi (strain ATCC 35210 / DSM 4680 / CIP 102532 / B31) (Borrelia burgdorferi).